The following is a 631-amino-acid chain: Probable glutamate--tRNA ligase, cytoplasmic (631 aa).

139 to 141 (RFP) provides a ligand contact to L-glutamate. The short motif at 144 to 153 (PSGFLHIGHI) is the 'HIGH' region element. His-149 lines the ATP pocket. L-glutamate-binding positions include Asp-173, 311-315 (YDFAC), and Arg-329. Residues Glu-332 and 367-371 (VLSKR) each bind ATP. A 'KMSKS' region motif is present at residues 367–371 (VLSKR).

This sequence belongs to the class-I aminoacyl-tRNA synthetase family. Glutamate--tRNA ligase type 2 subfamily.

Its subcellular location is the cytoplasm. The catalysed reaction is tRNA(Glu) + L-glutamate + ATP = L-glutamyl-tRNA(Glu) + AMP + diphosphate. This is Probable glutamate--tRNA ligase, cytoplasmic from Enterocytozoon bieneusi (strain H348) (Microsporidian parasite).